Reading from the N-terminus, the 688-residue chain is Glycine--tRNA ligase beta subunit (688 aa).

This sequence belongs to the class-II aminoacyl-tRNA synthetase family. As to quaternary structure, tetramer of two alpha and two beta subunits.

It is found in the cytoplasm. The catalysed reaction is tRNA(Gly) + glycine + ATP = glycyl-tRNA(Gly) + AMP + diphosphate. The sequence is that of Glycine--tRNA ligase beta subunit from Listeria monocytogenes serotype 4a (strain HCC23).